A 149-amino-acid chain; its full sequence is 3-hydroxyacyl-[acyl-carrier-protein] dehydratase FabZ (149 aa).

H53 is an active-site residue.

Belongs to the thioester dehydratase family. FabZ subfamily.

The protein resides in the cytoplasm. It catalyses the reaction a (3R)-hydroxyacyl-[ACP] = a (2E)-enoyl-[ACP] + H2O. Its function is as follows. Involved in unsaturated fatty acids biosynthesis. Catalyzes the dehydration of short chain beta-hydroxyacyl-ACPs and long chain saturated and unsaturated beta-hydroxyacyl-ACPs. The protein is 3-hydroxyacyl-[acyl-carrier-protein] dehydratase FabZ of Polynucleobacter necessarius subsp. necessarius (strain STIR1).